The sequence spans 1422 residues: MATTIQNNFRIRRNFGKINKIAEIPNLIAIQKFSYDKFLQADVPPEKRDDTGLQGVFKSVFPIKDFNETSSLEFVSYHLEKPKYDVDECHQRGMTYSAPIKVVVRLVVWDKDEETGAQSIRDVKEQEVYFGEIPLMTENGTFIINGTERVVVSQLHRSPGAFFDHDKGKSHSSGKLLYNARIIPYRGSWIDFEFDHKDILYVRIDRRRKLPATVLLRALGATPDTAKKDPVEFHGSAEEILKYYYDTETIRIEGKGKYEKDLVPDLLKGQRATRDIRDPKSNEVIVKKNRKYTESAIKKLVAAKMKSLPVEPEEVYTKISAEDVVDETTGEVLLEVNEEVTEAKVEELRKRNINEFKVLFIDNLNILPALRDTLMQDKISTPEEAIMEIYRRLRPGDPPTPETATNLFVNLFFNAERYDLSKVGRLKLNYKFGIEEPLENTVLTKRDILEVVRFLIDLKNGKPNKDVDDIDHLGNRRVRAVGELLENQYRIGLVRMERAIKERMSLQEIETLMPHDLINAKPVTAVIKEFFGSSQLSQFMDQTNPLSEVTHKRRLSALGPGGLTRERAGFEVRDVHSTHYGRICPIETPEGPNIGLIASLSTYARVNEYGFVETPYRKVEKGRVTDEVTFYSALEEEKHIIAQANAPVDKKGNFTEAKVWCRKEGEYIYVRPDEVDLMDVSPNQLVSVAASLVPFLENDDANRALMGSNMQRQAVPLLRTQAPLVGTGIEAIVARDSGVTTVAKRDGVVQSVDASRIVVKADVPTSATDVANEVDIYNLIKYQRSNQNTCINQKPIVKPGERVKKGDVIADGPATEMGELALGQNVVVAFMPWQGYNFEDSILLSERLIKEDVFTSVHIEEFECVARDTKLGKEEITRDIPNVGEEALKDLDESGIIRIGAEVKPGDILVGKITPKGETQLSPEEKLLRAIFGEKAGDVRDSSLRVPPGVSGTVINAKVFSRKGVEKDERAKAIEEMEEAKLLKDQNDEIKIIQDSAFQKIRRLLLGKEVTARLVDDKGEQLLKKGDVLDDALLDTVPQRYWGEIAVAGDVQDLARKIIENFEEQKELVKLLFGEKIGRLKKGDELPPGVIKMVKVYVAIKRKLAVGDKMAGRHGNKGVVSRVLPEEDLPYLEDGTPVDIVLNPLGVPSRMNVGQILETHLGWAARNVGLRLQEMIEKEWGADPLRKKLKAAFAGTEGGPVGERLAALIEDVPEKELPKLVQKLRRGMHVATPVFDGAREDEMKALMEEGSATLQSILFDGRTGEPFDQDVTVGVMYMLKLHHLVDEKIHARSIGPYSLVTQQPLGGKAQFGGQRLGEMEVWAMEAYGAAYSLQEFLTVKSDDVVGRTRMYEAIVKGENTLESGLPESFNVLIKELQSLALDVELLETPEAQAAREAAERDLGGGPLGAPRGAVASGEKSSA.

The disordered stretch occupies residues 1392–1422 (QAAREAAERDLGGGPLGAPRGAVASGEKSSA).

Belongs to the RNA polymerase beta chain family. In terms of assembly, the RNAP catalytic core consists of 2 alpha, 1 beta, 1 beta' and 1 omega subunit. When a sigma factor is associated with the core the holoenzyme is formed, which can initiate transcription.

It carries out the reaction RNA(n) + a ribonucleoside 5'-triphosphate = RNA(n+1) + diphosphate. Its function is as follows. DNA-dependent RNA polymerase catalyzes the transcription of DNA into RNA using the four ribonucleoside triphosphates as substrates. The protein is DNA-directed RNA polymerase subunit beta of Anaeromyxobacter dehalogenans (strain 2CP-1 / ATCC BAA-258).